The primary structure comprises 112 residues: MNALTEMKCEACQADAPKVTDAELAELVGMIPDWGVEIRDGIMQLERVYKFKNFKLAMAFTNKLADLAEAEFHHPGILTEWGKVTVTWWSHSIKGLHKNDFIMAAKTDQLLD.

The protein belongs to the pterin-4-alpha-carbinolamine dehydratase family.

It carries out the reaction (4aS,6R)-4a-hydroxy-L-erythro-5,6,7,8-tetrahydrobiopterin = (6R)-L-erythro-6,7-dihydrobiopterin + H2O. The polypeptide is Putative pterin-4-alpha-carbinolamine dehydratase (Shewanella frigidimarina (strain NCIMB 400)).